The chain runs to 447 residues: Phosphoglucosamine mutase (447 aa).

Residue S103 is the Phosphoserine intermediate of the active site. 4 residues coordinate Mg(2+): S103, D242, D244, and D246. A Phosphoserine modification is found at S103.

This sequence belongs to the phosphohexose mutase family. Mg(2+) serves as cofactor. Post-translationally, activated by phosphorylation.

It carries out the reaction alpha-D-glucosamine 1-phosphate = D-glucosamine 6-phosphate. Catalyzes the conversion of glucosamine-6-phosphate to glucosamine-1-phosphate. This chain is Phosphoglucosamine mutase, found in Dinoroseobacter shibae (strain DSM 16493 / NCIMB 14021 / DFL 12).